A 376-amino-acid polypeptide reads, in one-letter code: Putative glutamate--cysteine ligase 2-3 (376 aa).

The protein belongs to the glutamate--cysteine ligase type 2 family. YbdK subfamily.

It catalyses the reaction L-cysteine + L-glutamate + ATP = gamma-L-glutamyl-L-cysteine + ADP + phosphate + H(+). In terms of biological role, ATP-dependent carboxylate-amine ligase which exhibits weak glutamate--cysteine ligase activity. The protein is Putative glutamate--cysteine ligase 2-3 of Nocardioides sp. (strain ATCC BAA-499 / JS614).